A 471-amino-acid chain; its full sequence is Proton-coupled amino acid transporter-like protein pathetic (471 aa).

An N-linked (GlcNAc...) asparagine glycan is attached at Asn-61. 10 helical membrane-spanning segments follow: residues 81-101 (FAFMCSGLIMGIFSTIFTAFI), 153-173 (ILFGLFLTYFGTCSVYTVIVA), 187-207 (AVSLRMLICIMLVPLILIAWV), 216-236 (VSMVANVFMGLGLGITFYYLV), 253-273 (LPQFFSITIFAMEAIGVVMPL), 283-303 (FLGICGVLSQGMSGVTLIYML), 337-357 (LISLAVYCTFGLQFFVCLEII), 375-395 (VLRTVLVTAAVVLAVAVPTIG), 397-417 (FMGLIGAFCFSILGLIFPVVI), and 432-452 (WILWKNAIITLCGIGALVFGT).

Belongs to the amino acid/polyamine transporter 2 family. In third instar larvae, expressed at highest levels in the brain and digestive system with particularly high levels in surface glia of the brain (at protein level). In third instar larvae, expressed in all cells of the body wall (at protein level). Within the body wall of third instar larvae, most highly expressed in epithelial cells and sensory neurons. Expressed at a similar level in all da neurons (at protein level). Widely expressed during embryonic and late larval stages. Levels are highly dynamic in embryogenesis with surges of expression in many structures, including muscle primordia, salivary glands, proventriculus, trachea and gonads. Expressed in all or most cells of larval imaginal disks. Expression is also particularly strong in the pouch and hinge regions of the wing disk and in the morphogenetic furrow of the eye disk.

The protein localises to the cell membrane. Its subcellular location is the lysosome membrane. It is found in the late endosome membrane. It localises to the cell projection. The protein resides in the axon. The protein localises to the dendrite. Its subcellular location is the perikaryon. It is found in the cytoplasm. In terms of biological role, amino acid transporter which has pH-dependent electrogenic transport activity for alanine and glycine but not for proline. Plays a role in positive regulation of growth by directly or indirectly modulating the effects of the TOR signaling pathway. Required in a cell-autonomous manner for dendrite growth in neurons with large dendrite arbors. In Drosophila melanogaster (Fruit fly), this protein is Proton-coupled amino acid transporter-like protein pathetic.